A 581-amino-acid chain; its full sequence is Interleukin-22 receptor subunit alpha-1 (581 aa).

A signal peptide spans methionine 1–alanine 15. Residues histidine 16–threonine 228 lie on the Extracellular side of the membrane. 2 Fibronectin type-III domains span residues threonine 18 to serine 115 and proline 141 to threonine 221. Cysteine 71 and cysteine 79 are oxidised to a cystine. N-linked (GlcNAc...) asparagine glycosylation is present at asparagine 80. A disulfide bridge connects residues cysteine 128 and cysteine 217. A helical transmembrane segment spans residues tyrosine 229–leucine 249. The Cytoplasmic segment spans residues serine 250–serine 581. Disordered regions lie at residues glutamine 354 to lysine 493 and proline 539 to proline 563. Residues threonine 378–serine 389 show a composition bias toward polar residues. Residues serine 410 and serine 414 each carry the phosphoserine modification. Positions cysteine 440–glutamate 449 are enriched in polar residues.

It belongs to the type II cytokine receptor family. As to quaternary structure, heterodimer with IL10RB and with IL20RB. Interacts with FBXW12; the interaction promotes ubiquitination of IL22RA1. In terms of processing, ubiquitinated.

Its subcellular location is the cell membrane. Functionally, component of the receptor for IL20, IL22 and IL24. Component of IL22 receptor formed by IL22RA1 and IL10RB enabling IL22 signaling via JAK/STAT pathways. IL22 also induces activation of MAPK1/MAPK3 and Akt kinases pathways. Component of one of the receptor for IL20 and IL24 formed by IL22RA1 and IL20RB also signaling through STATs activation. Mediates IL24 antiangiogenic activity as well as IL24 inhibitory effect on endothelial cell tube formation and differentiation. The chain is Interleukin-22 receptor subunit alpha-1 (IL22RA1) from Bos taurus (Bovine).